A 354-amino-acid polypeptide reads, in one-letter code: Uroporphyrinogen decarboxylase (354 aa).

Substrate contacts are provided by residues 27–31 (RQAGR), D77, Y154, T209, and H327.

It belongs to the uroporphyrinogen decarboxylase family. In terms of assembly, homodimer.

It localises to the cytoplasm. It catalyses the reaction uroporphyrinogen III + 4 H(+) = coproporphyrinogen III + 4 CO2. Its pathway is porphyrin-containing compound metabolism; protoporphyrin-IX biosynthesis; coproporphyrinogen-III from 5-aminolevulinate: step 4/4. Functionally, catalyzes the decarboxylation of four acetate groups of uroporphyrinogen-III to yield coproporphyrinogen-III. The protein is Uroporphyrinogen decarboxylase of Pseudomonas entomophila (strain L48).